A 130-amino-acid polypeptide reads, in one-letter code: S-adenosylmethionine decarboxylase proenzyme (130 aa).

The Schiff-base intermediate with substrate; via pyruvic acid role is filled by S64. S64 carries the pyruvic acid (Ser); by autocatalysis modification. Residue H69 is the Proton acceptor; for processing activity of the active site. C84 (proton donor; for catalytic activity) is an active-site residue.

It belongs to the prokaryotic AdoMetDC family. Type 1 subfamily. Heterotetramer of two alpha and two beta chains arranged as a dimer of alpha/beta heterodimers. It depends on pyruvate as a cofactor. Is synthesized initially as an inactive proenzyme. Formation of the active enzyme involves a self-maturation process in which the active site pyruvoyl group is generated from an internal serine residue via an autocatalytic post-translational modification. Two non-identical subunits are generated from the proenzyme in this reaction, and the pyruvate is formed at the N-terminus of the alpha chain, which is derived from the carboxyl end of the proenzyme. The post-translation cleavage follows an unusual pathway, termed non-hydrolytic serinolysis, in which the side chain hydroxyl group of the serine supplies its oxygen atom to form the C-terminus of the beta chain, while the remainder of the serine residue undergoes an oxidative deamination to produce ammonia and the pyruvoyl group blocking the N-terminus of the alpha chain.

The catalysed reaction is S-adenosyl-L-methionine + H(+) = S-adenosyl 3-(methylsulfanyl)propylamine + CO2. It participates in amine and polyamine biosynthesis; S-adenosylmethioninamine biosynthesis; S-adenosylmethioninamine from S-adenosyl-L-methionine: step 1/1. In terms of biological role, catalyzes the decarboxylation of S-adenosylmethionine to S-adenosylmethioninamine (dcAdoMet), the propylamine donor required for the synthesis of the polyamines spermine and spermidine from the diamine putrescine. In Picrophilus torridus (strain ATCC 700027 / DSM 9790 / JCM 10055 / NBRC 100828 / KAW 2/3), this protein is S-adenosylmethionine decarboxylase proenzyme.